The following is a 287-amino-acid chain: Pantothenate synthetase (287 aa).

30-37 contacts ATP; the sequence is MGNLHSGH. The Proton donor role is filled by His-37. Position 61 (Gln-61) interacts with (R)-pantoate. Gln-61 provides a ligand contact to beta-alanine. Residue 149–152 participates in ATP binding; it reads GEKD. A (R)-pantoate-binding site is contributed by Gln-155. ATP contacts are provided by residues Val-178 and 186–189; that span reads LSSR.

It belongs to the pantothenate synthetase family. In terms of assembly, homodimer.

It localises to the cytoplasm. The catalysed reaction is (R)-pantoate + beta-alanine + ATP = (R)-pantothenate + AMP + diphosphate + H(+). Its pathway is cofactor biosynthesis; (R)-pantothenate biosynthesis; (R)-pantothenate from (R)-pantoate and beta-alanine: step 1/1. In terms of biological role, catalyzes the condensation of pantoate with beta-alanine in an ATP-dependent reaction via a pantoyl-adenylate intermediate. This is Pantothenate synthetase from Pseudomonas putida (strain ATCC 47054 / DSM 6125 / CFBP 8728 / NCIMB 11950 / KT2440).